The following is a 216-amino-acid chain: Elongation factor Ts (216 aa).

Positions 81–84 (TDFV) are involved in Mg(2+) ion dislocation from EF-Tu.

The protein belongs to the EF-Ts family.

It localises to the cytoplasm. In terms of biological role, associates with the EF-Tu.GDP complex and induces the exchange of GDP to GTP. It remains bound to the aminoacyl-tRNA.EF-Tu.GTP complex up to the GTP hydrolysis stage on the ribosome. This chain is Elongation factor Ts, found in Citrifermentans bemidjiense (strain ATCC BAA-1014 / DSM 16622 / JCM 12645 / Bem) (Geobacter bemidjiensis).